The sequence spans 967 residues: Isoleucine--tRNA ligase (967 aa).

Residues 68 to 78 (PYANGTLHMGH) carry the 'HIGH' region motif. Residue Glu583 participates in L-isoleucyl-5'-AMP binding. Residues 624 to 628 (KMSKS) carry the 'KMSKS' region motif. Lys627 contributes to the ATP binding site. Residues Cys937, Cys940, Cys957, and Cys960 each contribute to the Zn(2+) site.

It belongs to the class-I aminoacyl-tRNA synthetase family. IleS type 1 subfamily. As to quaternary structure, monomer. The cofactor is Zn(2+).

The protein localises to the cytoplasm. It carries out the reaction tRNA(Ile) + L-isoleucine + ATP = L-isoleucyl-tRNA(Ile) + AMP + diphosphate. Functionally, catalyzes the attachment of isoleucine to tRNA(Ile). As IleRS can inadvertently accommodate and process structurally similar amino acids such as valine, to avoid such errors it has two additional distinct tRNA(Ile)-dependent editing activities. One activity is designated as 'pretransfer' editing and involves the hydrolysis of activated Val-AMP. The other activity is designated 'posttransfer' editing and involves deacylation of mischarged Val-tRNA(Ile). This is Isoleucine--tRNA ligase from Prochlorococcus marinus (strain NATL2A).